Here is a 58-residue protein sequence, read N- to C-terminus: Proteinase inhibitor PSKP-2 (58 aa).

The Kazal-like domain maps to 1-58; sequence VIEPDCKKYEGKKCPPDIALVCGTNGREYYNECALCVFIRDSTLKADKAIKIKKWGKC. Intrachain disulfides connect C6–C36, C14–C33, and C22–C58.

In terms of tissue distribution, skin.

It is found in the secreted. May have a role in mucosal defense against microbes by interacting directly with their membranes. This chain is Proteinase inhibitor PSKP-2, found in Phyllomedusa sauvagei (Sauvage's leaf frog).